The sequence spans 197 residues: NADH-quinone oxidoreductase subunit C (197 aa).

It belongs to the complex I 30 kDa subunit family. NDH-1 is composed of 14 different subunits. Subunits NuoB, C, D, E, F, and G constitute the peripheral sector of the complex.

Its subcellular location is the cell inner membrane. The enzyme catalyses a quinone + NADH + 5 H(+)(in) = a quinol + NAD(+) + 4 H(+)(out). Its function is as follows. NDH-1 shuttles electrons from NADH, via FMN and iron-sulfur (Fe-S) centers, to quinones in the respiratory chain. The immediate electron acceptor for the enzyme in this species is believed to be ubiquinone. Couples the redox reaction to proton translocation (for every two electrons transferred, four hydrogen ions are translocated across the cytoplasmic membrane), and thus conserves the redox energy in a proton gradient. In Rickettsia prowazekii (strain Madrid E), this protein is NADH-quinone oxidoreductase subunit C.